Reading from the N-terminus, the 89-residue chain is Large ribosomal subunit protein uL29c (89 aa).

Belongs to the universal ribosomal protein uL29 family.

It is found in the plastid. The protein localises to the chloroplast. The polypeptide is Large ribosomal subunit protein uL29c (rpl29) (Trieres chinensis (Marine centric diatom)).